The following is a 157-amino-acid chain: Transcription elongation factor GreA (157 aa).

The protein belongs to the GreA/GreB family.

In terms of biological role, necessary for efficient RNA polymerase transcription elongation past template-encoded arresting sites. The arresting sites in DNA have the property of trapping a certain fraction of elongating RNA polymerases that pass through, resulting in locked ternary complexes. Cleavage of the nascent transcript by cleavage factors such as GreA or GreB allows the resumption of elongation from the new 3'terminus. GreA releases sequences of 2 to 3 nucleotides. The protein is Transcription elongation factor GreA of Mesorhizobium japonicum (strain LMG 29417 / CECT 9101 / MAFF 303099) (Mesorhizobium loti (strain MAFF 303099)).